We begin with the raw amino-acid sequence, 153 residues long: MSAKYTILEELIRPVVEGLGFEFWGMEYLSLGKDSVLRIYIETDAEKGIDVEDCARVSRQVSSILDVEDPITGEYNLEVSSPGLDRPLFSLAQYQAYIGSIVSLRLRVPFDGRRKFKGQLMGIESEDIVIRVDQEEYLLPIDLIDKANVVPQF.

Belongs to the RimP family.

The protein localises to the cytoplasm. Its function is as follows. Required for maturation of 30S ribosomal subunits. The sequence is that of Ribosome maturation factor RimP from Marinomonas sp. (strain MWYL1).